A 303-amino-acid chain; its full sequence is MATH domain and coiled-coil domain-containing protein At3g58250 (303 aa).

An MATH domain is found at Lys-8–Ile-135. Residues Lys-231–Ala-287 are a coiled coil.

In Arabidopsis thaliana (Mouse-ear cress), this protein is MATH domain and coiled-coil domain-containing protein At3g58250.